The chain runs to 201 residues: Probable nicotinate-nucleotide adenylyltransferase (201 aa).

This sequence belongs to the NadD family.

The enzyme catalyses nicotinate beta-D-ribonucleotide + ATP + H(+) = deamido-NAD(+) + diphosphate. Its pathway is cofactor biosynthesis; NAD(+) biosynthesis; deamido-NAD(+) from nicotinate D-ribonucleotide: step 1/1. Its function is as follows. Catalyzes the reversible adenylation of nicotinate mononucleotide (NaMN) to nicotinic acid adenine dinucleotide (NaAD). In Clostridium botulinum (strain Okra / Type B1), this protein is Probable nicotinate-nucleotide adenylyltransferase.